A 377-amino-acid chain; its full sequence is Gastricsin (377 aa).

The signal sequence occupies residues Q1–A5. 2 consecutive propeptides (activation peptide) follow at residues A6 to F31 and L32 to L48. One can recognise a Peptidase A1 domain in the interval Y62–A374. D80 is an active-site residue. 2 disulfide bridges follow: C93–C98 and C256–C260. D265 is an active-site residue. An intrachain disulfide couples C299 to C332.

It belongs to the peptidase A1 family. Each pepsinogen is converted to corresponding pepsin at pH 2.0 in part as a result of the release of a 47 AA activation segment and in part as a result of stepwise proteolytic cleavage via an intermediate form(s).

Its subcellular location is the secreted. It catalyses the reaction More restricted specificity than pepsin A, but shows preferential cleavage at Tyr-|-Xaa bonds. High activity on hemoglobin.. Functionally, hydrolyzes a variety of proteins. The polypeptide is Gastricsin (PGC) (Macaca fuscata fuscata (Japanese macaque)).